The sequence spans 424 residues: MPSHPHLWFPFTSVKDAPDPLKVVSGKGARLTLADGRELIDCISSWWVNLHGHAHLRIVEAIAQQAATLEHVIFAGFSHEPAERLAMELCKILPEKLTRVFFSDNGSTAVEVALKMALQYWHNLDQPRSRILAFDGAYHGDTFGAMSVGERSLFNAPFEKLLFSVEFLPYPETWWGDETVEAKEAAAIAAVEQALAAGDVAAVIIEPLVQGAGGMRMARPQFLQQLAARVQAAGSLLIADEVMTGFGRTGAWFACQRAGIQPDLICLSKGLTGGFLPLSITVATEVIYDTFCSGNPDHTFYHGHSYTANPLGCAAAIASLELLLDSEAIVQGLEDAHLPGLELLAQHPKVTRPRLTGGIAACDLVSDRGGYLDPIGLRVRQAAIARGLLLRPLGNVLYLLPPYCLTPTELQDIYAAIADLLDEI.

Tryptophan 46 serves as a coordination point for substrate. 106–107 (GS) contacts pyridoxal 5'-phosphate. Tyrosine 138 is a binding site for substrate. Aspartate 240 contacts pyridoxal 5'-phosphate. Residues lysine 269 and glycine 303 each contribute to the substrate site. An N6-(pyridoxal phosphate)lysine modification is found at lysine 269. 304–305 (HS) contributes to the pyridoxal 5'-phosphate binding site. Substrate is bound at residue arginine 391.

It belongs to the class-III pyridoxal-phosphate-dependent aminotransferase family. BioA subfamily. Homodimer. Pyridoxal 5'-phosphate serves as cofactor.

Its subcellular location is the cytoplasm. The catalysed reaction is (8S)-8-amino-7-oxononanoate + S-adenosyl-L-methionine = S-adenosyl-4-methylsulfanyl-2-oxobutanoate + (7R,8S)-7,8-diammoniononanoate. It functions in the pathway cofactor biosynthesis; biotin biosynthesis; 7,8-diaminononanoate from 8-amino-7-oxononanoate (SAM route): step 1/1. Catalyzes the transfer of the alpha-amino group from S-adenosyl-L-methionine (SAM) to 7-keto-8-aminopelargonic acid (KAPA) to form 7,8-diaminopelargonic acid (DAPA). It is the only aminotransferase known to utilize SAM as an amino donor. Complements a bioU deletion in Synechocystis PCC 6803. The polypeptide is Adenosylmethionine-8-amino-7-oxononanoate aminotransferase (Synechococcus elongatus (strain ATCC 33912 / PCC 7942 / FACHB-805) (Anacystis nidulans R2)).